A 410-amino-acid polypeptide reads, in one-letter code: Na(+)-translocating NADH-quinone reductase subunit B (410 aa).

3 consecutive transmembrane segments (helical) span residues 56–76 (MMIL…YNVG), 119–139 (LFGA…GGFW), and 159–179 (SILF…ALGI). Position 232 is an FMN phosphoryl threonine (T232). 5 helical membrane-spanning segments follow: residues 266–286 (GSIG…IVFA), 293–313 (IIAG…FIGS), 318–338 (MFAM…GMLF), 347–367 (SFTN…CVLI), and 377–397 (GMML…YFVA).

The protein belongs to the NqrB/RnfD family. As to quaternary structure, composed of six subunits; NqrA, NqrB, NqrC, NqrD, NqrE and NqrF. FMN is required as a cofactor.

It localises to the cell inner membrane. The enzyme catalyses a ubiquinone + n Na(+)(in) + NADH + H(+) = a ubiquinol + n Na(+)(out) + NAD(+). Functionally, NQR complex catalyzes the reduction of ubiquinone-1 to ubiquinol by two successive reactions, coupled with the transport of Na(+) ions from the cytoplasm to the periplasm. NqrA to NqrE are probably involved in the second step, the conversion of ubisemiquinone to ubiquinol. This is Na(+)-translocating NADH-quinone reductase subunit B from Neisseria meningitidis serogroup B (strain ATCC BAA-335 / MC58).